Consider the following 275-residue polypeptide: Diaminopimelate epimerase (275 aa).

Residues asparagine 12, glutamine 45, and asparagine 65 each coordinate substrate. The Proton donor role is filled by cysteine 74. Substrate-binding positions include 75-76, asparagine 158, asparagine 191, and 209-210; these read GN and ER. The active-site Proton acceptor is cysteine 218. A substrate-binding site is contributed by 219–220; sequence GS.

The protein belongs to the diaminopimelate epimerase family. In terms of assembly, homodimer.

It localises to the cytoplasm. It catalyses the reaction (2S,6S)-2,6-diaminopimelate = meso-2,6-diaminopimelate. Its pathway is amino-acid biosynthesis; L-lysine biosynthesis via DAP pathway; DL-2,6-diaminopimelate from LL-2,6-diaminopimelate: step 1/1. Its function is as follows. Catalyzes the stereoinversion of LL-2,6-diaminopimelate (L,L-DAP) to meso-diaminopimelate (meso-DAP), a precursor of L-lysine and an essential component of the bacterial peptidoglycan. The chain is Diaminopimelate epimerase from Shewanella amazonensis (strain ATCC BAA-1098 / SB2B).